Consider the following 477-residue polypeptide: Argininosuccinate lyase (477 aa).

This sequence belongs to the lyase 1 family. Argininosuccinate lyase subfamily.

It localises to the cytoplasm. The enzyme catalyses 2-(N(omega)-L-arginino)succinate = fumarate + L-arginine. The protein operates within amino-acid biosynthesis; L-arginine biosynthesis; L-arginine from L-ornithine and carbamoyl phosphate: step 3/3. This Corynebacterium efficiens (strain DSM 44549 / YS-314 / AJ 12310 / JCM 11189 / NBRC 100395) protein is Argininosuccinate lyase.